The following is a 300-amino-acid chain: Bifunctional protein FolD (300 aa).

Residues 168–170 (GRS), serine 193, and isoleucine 234 contribute to the NADP(+) site.

Belongs to the tetrahydrofolate dehydrogenase/cyclohydrolase family. Homodimer.

It catalyses the reaction (6R)-5,10-methylene-5,6,7,8-tetrahydrofolate + NADP(+) = (6R)-5,10-methenyltetrahydrofolate + NADPH. It carries out the reaction (6R)-5,10-methenyltetrahydrofolate + H2O = (6R)-10-formyltetrahydrofolate + H(+). It participates in one-carbon metabolism; tetrahydrofolate interconversion. In terms of biological role, catalyzes the oxidation of 5,10-methylenetetrahydrofolate to 5,10-methenyltetrahydrofolate and then the hydrolysis of 5,10-methenyltetrahydrofolate to 10-formyltetrahydrofolate. In Ehrlichia ruminantium (strain Gardel), this protein is Bifunctional protein FolD.